Reading from the N-terminus, the 396-residue chain is S-adenosylmethionine synthase (396 aa).

His16 contributes to the ATP binding site. Asp18 is a Mg(2+) binding site. Position 44 (Glu44) interacts with K(+). Residues Glu57 and Gln100 each contribute to the L-methionine site. Residues 100-110 (QSPDINQGVDR) form a flexible loop region. Residues 165–167 (DAK), Asp240, 246–247 (RK), Ala263, and Lys267 each bind ATP. An L-methionine-binding site is contributed by Asp240. Lys271 serves as a coordination point for L-methionine.

Belongs to the AdoMet synthase family. Homotetramer; dimer of dimers. It depends on Mg(2+) as a cofactor. K(+) serves as cofactor.

Its subcellular location is the cytoplasm. The enzyme catalyses L-methionine + ATP + H2O = S-adenosyl-L-methionine + phosphate + diphosphate. It participates in amino-acid biosynthesis; S-adenosyl-L-methionine biosynthesis; S-adenosyl-L-methionine from L-methionine: step 1/1. In terms of biological role, catalyzes the formation of S-adenosylmethionine (AdoMet) from methionine and ATP. The overall synthetic reaction is composed of two sequential steps, AdoMet formation and the subsequent tripolyphosphate hydrolysis which occurs prior to release of AdoMet from the enzyme. The polypeptide is S-adenosylmethionine synthase (Pseudomonas fluorescens (strain ATCC BAA-477 / NRRL B-23932 / Pf-5)).